Consider the following 605-residue polypeptide: Membrane protein insertase YidC (605 aa).

A helical membrane pass occupies residues 8–28 (MIIAIALSLAVLLGWNYFVAA). Over residues 35–47 (RQQQAQTSASPSP) the composition is skewed to low complexity. The disordered stretch occupies residues 35 to 71 (RQQQAQTSASPSPKEGGPSAPVPGTLPGASGGNPQAA). The next 4 helical transmembrane spans lie at 377–397 (LFGNFGVSILVVTLILKLFFL), 451–471 (WPVVIQIPVFFALYKVLFVTI), 496–516 (LFGLLPFAAPDLVHLGVWPIV), and 540–560 (FTFMPIIFTFMLGSFPAGLVI).

It belongs to the OXA1/ALB3/YidC family. Type 1 subfamily. As to quaternary structure, interacts with the Sec translocase complex via SecD. Specifically interacts with transmembrane segments of nascent integral membrane proteins during membrane integration.

It is found in the cell inner membrane. Its function is as follows. Required for the insertion and/or proper folding and/or complex formation of integral membrane proteins into the membrane. Involved in integration of membrane proteins that insert both dependently and independently of the Sec translocase complex, as well as at least some lipoproteins. Aids folding of multispanning membrane proteins. The polypeptide is Membrane protein insertase YidC (Methylobacterium nodulans (strain LMG 21967 / CNCM I-2342 / ORS 2060)).